The primary structure comprises 148 residues: SsrA-binding protein (148 aa).

The protein belongs to the SmpB family.

Its subcellular location is the cytoplasm. In terms of biological role, required for rescue of stalled ribosomes mediated by trans-translation. Binds to transfer-messenger RNA (tmRNA), required for stable association of tmRNA with ribosomes. tmRNA and SmpB together mimic tRNA shape, replacing the anticodon stem-loop with SmpB. tmRNA is encoded by the ssrA gene; the 2 termini fold to resemble tRNA(Ala) and it encodes a 'tag peptide', a short internal open reading frame. During trans-translation Ala-aminoacylated tmRNA acts like a tRNA, entering the A-site of stalled ribosomes, displacing the stalled mRNA. The ribosome then switches to translate the ORF on the tmRNA; the nascent peptide is terminated with the 'tag peptide' encoded by the tmRNA and targeted for degradation. The ribosome is freed to recommence translation, which seems to be the essential function of trans-translation. The protein is SsrA-binding protein of Ehrlichia canis (strain Jake).